Consider the following 357-residue polypeptide: U5 small nuclear ribonucleoprotein 40 kDa protein (357 aa).

Residue Lys-18 forms a Glycyl lysine isopeptide (Lys-Gly) (interchain with G-Cter in SUMO2) linkage. Arg-21 is modified (asymmetric dimethylarginine). WD repeat units lie at residues 64–103 (GHEGEVYCCKFHPNGSTLASAGFDRLILLWNVYGDCDNYA), 107–146 (GHSGAVMELHYNTDGSMLFSASTDKTVAVWDSETGERVKR), 149–189 (GHTS…AIQT), 191–230 (QNTYQVLAVTFNDTSDQIISGGIDNDIKVWDLRQNKLTYT), 233–272 (GHADSVTGLSLSSEGSYLLSNAMDNTVRVWDVRPFAPKER), 283–322 (NFEKNLLRCSWSPDGSKIAAGSADRFVYVWDTTSRRILYK), and 325–357 (GHAGSINEVAFHPDEPIIISASSDKRLYMGEIQ). Lys-270 is covalently cross-linked (Glycyl lysine isopeptide (Lys-Gly) (interchain with G-Cter in SUMO2)).

As to quaternary structure, component of the pre-catalytic and catalytic spliceosome complexes. Component of the postcatalytic spliceosome P complex. Part of the U5 snRNP complex. Interacts with PRPF8. Component of the U4/U6-U5 tri-snRNP complex composed of the U4, U6 and U5 snRNAs and at least PRPF3, PRPF4, PRPF6, PRPF8, PRPF31, SNRNP200, TXNL4A, WDR57, SNRNP40, DDX23, CD2BP2, PPIH, SNU13, EFTUD2, SART1 and USP39. Component of the minor spliceosome, which splices U12-type introns.

It localises to the nucleus. Required for pre-mRNA splicing as component of the activated spliceosome. Component of the U5 small nuclear ribonucleoprotein (snRNP) complex and the U4/U6-U5 tri-snRNP complex, building blocks of the spliceosome. As a component of the minor spliceosome, involved in the splicing of U12-type introns in pre-mRNAs. This is U5 small nuclear ribonucleoprotein 40 kDa protein (SNRNP40) from Homo sapiens (Human).